We begin with the raw amino-acid sequence, 378 residues long: tRNA-specific 2-thiouridylase MnmA (378 aa).

Residues 9 to 16 (GVSGGVDS) and M35 each bind ATP. Positions 94 to 96 (NPD) are interaction with target base in tRNA. C99 (nucleophile) is an active-site residue. A disulfide bridge links C99 with C195. An ATP-binding site is contributed by G123. The segment at 145-147 (KDQ) is interaction with tRNA. Residue C195 is the Cysteine persulfide intermediate of the active site. Residues 307-308 (RY) form an interaction with tRNA region.

It belongs to the MnmA/TRMU family.

The protein localises to the cytoplasm. The enzyme catalyses S-sulfanyl-L-cysteinyl-[protein] + uridine(34) in tRNA + AH2 + ATP = 2-thiouridine(34) in tRNA + L-cysteinyl-[protein] + A + AMP + diphosphate + H(+). Its function is as follows. Catalyzes the 2-thiolation of uridine at the wobble position (U34) of tRNA, leading to the formation of s(2)U34. This Xanthomonas campestris pv. campestris (strain 8004) protein is tRNA-specific 2-thiouridylase MnmA.